A 577-amino-acid chain; its full sequence is Arginine--tRNA ligase (577 aa).

The short motif at 122-132 is the 'HIGH' region element; it reads PNVAKEMHVGH.

Belongs to the class-I aminoacyl-tRNA synthetase family. As to quaternary structure, monomer.

It localises to the cytoplasm. It catalyses the reaction tRNA(Arg) + L-arginine + ATP = L-arginyl-tRNA(Arg) + AMP + diphosphate. The chain is Arginine--tRNA ligase from Escherichia coli (strain K12 / MC4100 / BW2952).